A 234-amino-acid polypeptide reads, in one-letter code: Myelin protein zero-like protein 3 (234 aa).

The first 31 residues, 1-31 (MQQSGVPGSRGCALCPLLGVLFFQGVYVIFS), serve as a signal peptide directing secretion. The region spanning 32-148 (LEIKADAHVR…NIPATELTVT (117 aa)) is the Ig-like V-type domain. Topologically, residues 32-158 (LEIKADAHVR…ERGFGTMLSS (127 aa)) are extracellular. Cys-52 and Cys-128 are disulfide-bonded. A glycan (N-linked (GlcNAc...) asparagine) is linked at Asn-123. A helical transmembrane segment spans residues 159–179 (VALLSILVFIPSTVVVILLLV). Topologically, residues 180–234 (RMGRKSAGLKKRSKSGYKKSSIEVSDDTDQEGDDCMAKLCVRCAECVDSDYEETY) are cytoplasmic.

It belongs to the myelin P0 protein family.

It is found in the membrane. Functionally, mediates homophilic cell-cell adhesion. This Bos taurus (Bovine) protein is Myelin protein zero-like protein 3 (MPZL3).